A 202-amino-acid chain; its full sequence is MSGRSVRAETRSRAKDDIKKVMAAIEKVRKWEKKWVTVGDTSLRIFKWVPVTDSKEKEKSKSNNTAAREPNGFPSDASANSSLLLEFQDENSNQSSVSDVYQLKVDSSTNSSPSPQQSESLSPAHTSDFRTDDSQPPTLGQEILEEPSLPASEVADEPPTLTKEEPVPVETQTTEEEEDSGAPPLKRFCVDQPVVPQTTSES.

The interval 53–202 (DSKEKEKSKS…PVVPQTTSES (150 aa)) is disordered. Over residues 90 to 99 (ENSNQSSVSD) the composition is skewed to polar residues. Positions 107–123 (SSTNSSPSPQQSESLSP) are enriched in low complexity. Phosphoserine is present on residues serine 114, serine 118, serine 120, serine 122, serine 127, serine 148, and serine 152.

It belongs to the BCL7 family.

In terms of biological role, positive regulator of apoptosis. Plays a role in the Wnt signaling pathway, negatively regulating the expression of Wnt signaling components CTNNB1 and HMGA1. Involved in cell cycle progression, maintenance of the nuclear structure and stem cell differentiation. May play a role in lung tumor development or progression. This chain is B-cell CLL/lymphoma 7 protein family member B (Bcl7b), found in Mus musculus (Mouse).